A 586-amino-acid polypeptide reads, in one-letter code: Serine/threonine-protein kinase TDA1 (586 aa).

Residues 1–26 (MTTASSSASQLQQRLPEEKPWPQLSG) are disordered. The 313-residue stretch at 39–351 (VTNHNSLGDG…AKNLKQHPFI (313 aa)) folds into the Protein kinase domain. ATP contacts are provided by residues 45 to 53 (LGDGNFSVV) and lysine 68. Aspartate 180 functions as the Proton acceptor in the catalytic mechanism. Positions 503 to 524 (TTPESRSNFNTPKTLSRQGSST) are disordered. At threonine 504 the chain carries Phosphothreonine. 2 positions are modified to phosphoserine: serine 509 and serine 518. Threonine 538 is subject to Phosphothreonine. Serine 578 is subject to Phosphoserine.

The protein belongs to the protein kinase superfamily. Ser/Thr protein kinase family. In terms of assembly, interacts with RIM11.

Its subcellular location is the cytoplasm. It localises to the nucleus. It carries out the reaction L-seryl-[protein] + ATP = O-phospho-L-seryl-[protein] + ADP + H(+). It catalyses the reaction L-threonyl-[protein] + ATP = O-phospho-L-threonyl-[protein] + ADP + H(+). Serine/threonine protein kinase shown to have protein phosphorylation activity in vitro. This chain is Serine/threonine-protein kinase TDA1 (TDA1), found in Saccharomyces cerevisiae (strain ATCC 204508 / S288c) (Baker's yeast).